The primary structure comprises 368 residues: CCA-adding enzyme (368 aa).

Residues Gly8 and Arg11 each coordinate ATP. CTP contacts are provided by Gly8 and Arg11. Positions 21 and 23 each coordinate Mg(2+). Residues Arg91, Arg137, and Arg140 each contribute to the ATP site. CTP is bound by residues Arg91, Arg137, and Arg140.

It belongs to the tRNA nucleotidyltransferase/poly(A) polymerase family. Bacterial CCA-adding enzyme type 2 subfamily. It depends on Mg(2+) as a cofactor.

The enzyme catalyses a tRNA precursor + 2 CTP + ATP = a tRNA with a 3' CCA end + 3 diphosphate. It catalyses the reaction a tRNA with a 3' CCA end + 2 CTP + ATP = a tRNA with a 3' CCACCA end + 3 diphosphate. Functionally, catalyzes the addition and repair of the essential 3'-terminal CCA sequence in tRNAs without using a nucleic acid template. Adds these three nucleotides in the order of C, C, and A to the tRNA nucleotide-73, using CTP and ATP as substrates and producing inorganic pyrophosphate. tRNA 3'-terminal CCA addition is required both for tRNA processing and repair. Also involved in tRNA surveillance by mediating tandem CCA addition to generate a CCACCA at the 3' terminus of unstable tRNAs. While stable tRNAs receive only 3'-terminal CCA, unstable tRNAs are marked with CCACCA and rapidly degraded. The protein is CCA-adding enzyme of Pseudomonas putida (strain ATCC 700007 / DSM 6899 / JCM 31910 / BCRC 17059 / LMG 24140 / F1).